The primary structure comprises 293 residues: Elongation factor Ts (293 aa).

Positions 80–83 are involved in Mg(2+) ion dislocation from EF-Tu; the sequence is TDFV.

It belongs to the EF-Ts family.

The protein resides in the cytoplasm. Functionally, associates with the EF-Tu.GDP complex and induces the exchange of GDP to GTP. It remains bound to the aminoacyl-tRNA.EF-Tu.GTP complex up to the GTP hydrolysis stage on the ribosome. The polypeptide is Elongation factor Ts (Burkholderia pseudomallei (strain 1106a)).